Reading from the N-terminus, the 316-residue chain is Endochitinase WIN8 (316 aa).

Positions 1–23 are cleaved as a signal peptide; sequence MRFWALTVLSLLLSLLLGVSSDT. Positions 24-64 constitute a Chitin-binding type-1 domain; the sequence is AQCGSQAGNATCPNDLCCSSGGYCGLTVAYCCAGCVSQCRN. Cystine bridges form between C26-C41, C35-C47, C40-C54, C58-C62, C84-C146, C158-C168, and C266-C298. Residue E128 is the Proton donor of the active site.

This sequence belongs to the glycosyl hydrolase 19 family. Chitinase class I subfamily.

It catalyses the reaction Random endo-hydrolysis of N-acetyl-beta-D-glucosaminide (1-&gt;4)-beta-linkages in chitin and chitodextrins.. Functionally, defense against chitin-containing fungal pathogens. The chain is Endochitinase WIN8 (WIN8) from Populus trichocarpa (Western balsam poplar).